Reading from the N-terminus, the 230-residue chain is Probable thioesterase YBR096W (230 aa).

Belongs to the lcsJ thioesterase family.

The sequence is that of Probable thioesterase YBR096W from Saccharomyces cerevisiae (strain ATCC 204508 / S288c) (Baker's yeast).